Consider the following 232-residue polypeptide: MTETFKVAITFVSPSSEALAQSIIDSINKSADTTRAIKIQADMRDTDSPLRIIDATICAFGPNIDILVNNAGVESLVSLSELGLQDFNECIDVNFRAVVFMTKSVIPYLRSPGRIINISSSSAHAGGLSSGIYAASKAAVEALARFWATSLGPQGHSVNTVVPGLTQTDMYERIIAEESSAAYHRTVASMTPMGGRVGTPEDIARIVSLLVEPRSQWVTGQTISATGGLILL.

The first 20 residues, 1 to 20, serve as a signal peptide directing secretion; that stretch reads MTETFKVAITFVSPSSEALA. Position 19 (L19) interacts with NADP(+). N-linked (GlcNAc...) asparagine glycosylation occurs at N28. Residues D42, N70, and K103 each coordinate NADP(+). N-linked (GlcNAc...) asparagine glycosylation is present at N117. Active-site proton donor residues include S119 and S121. The NADP(+) site is built by Y133, K137, and T168. Y133 serves as the catalytic Proton acceptor. The active-site Lowers pKa of active site Tyr is the K137.

Belongs to the short-chain dehydrogenases/reductases (SDR) family.

The catalysed reaction is a primary alcohol + NAD(+) = an aldehyde + NADH + H(+). The enzyme catalyses a secondary alcohol + NAD(+) = a ketone + NADH + H(+). It functions in the pathway mycotoxin biosynthesis. Dehydrogenase; part of the Tox1A locus, one of the 2 loci that mediate the biosynthesis of T-toxin, a family of linear polyketides 37 to 45 carbons in length, of which the major component is 41 carbons, and which leads to high virulence to maize. One of the PKSs (PKS1 or PKS2) could synthesize a precursor, used subsequently by the other PKS as starter unit, to add additional carbons. Variability in the length of the final carbon backbone C35-47 could be achieved by varying the number of condensation cycles, or use of different starter or extender units or might be due to decarboxylation of the penultimate product, catalyzed by DEC1. Additional proteins are required for the biosynthesis of T-toxin, including oxidoreductases RED1, RED2, RED3, LAM1 and OXI1, as well as esterase TOX9. This is Dehydrogenase OXI1 from Cochliobolus heterostrophus (strain C4 / ATCC 48331 / race T) (Southern corn leaf blight fungus).